The sequence spans 435 residues: MAASDTERDGLAPEKTSPDRDKKKEQSDVSVSPRASKHHYSRSRSRSRERKRKSDNEGRKHRSRSRSKEARRHESKDKSSKKHKSEEHNDKEHSSDKGRERLNSSENGEDRHKRKERKSSRGRSHSRSRSRERRHRSRSRERKKSRSRSRERKKSRSRSRERKKSRSRSRERKRRIRSRSRSRSRHRHRTRSRSRTRSRSRDRKKRIEKPRRFSRSLSRTPSPPPFRGRNTAMDAQEALARRLERAKKLQEQREKEMVEKQKQQEIAAAAATGGSVLNVAALLASGTQVTPQIAMAAQMAALQAKALAETGIAVPSYYNPAAVNPMKFAEQEKKKRKMLWQGKKEGDKSQSAEIWEKLNFGNKDQNVKFRKLMGIKSEDEAGCSSVDEESYKTLKQQEEVFRNLDAQYEMARSQTHTQRGMGLGFTSSMRGMDAV.

Residues 1-27 show a composition bias toward basic and acidic residues; that stretch reads MAASDTERDGLAPEKTSPDRDKKKEQS. A disordered region spans residues 1–230; that stretch reads MAASDTERDG…PSPPPFRGRN (230 aa). Position 2 is an N-acetylalanine (alanine 2). Residue serine 4 is modified to Phosphoserine. Phosphothreonine is present on residues threonine 6 and threonine 16. Residues serine 17, serine 30, and serine 32 each carry the phosphoserine modification. Over residues 35–51 the composition is skewed to basic residues; it reads ASKHHYSRSRSRSRERK. Over residues 66-111 the composition is skewed to basic and acidic residues; it reads RSKEARRHESKDKSSKKHKSEEHNDKEHSSDKGRERLNSSENGEDR. Position 104 is a phosphoserine (serine 104). Residues 112-214 are compositionally biased toward basic residues; that stretch reads HKRKERKSSR…KRIEKPRRFS (103 aa). Residues 230–270 are a coiled coil; that stretch reads NTAMDAQEALARRLERAKKLQEQREKEMVEKQKQQEIAAAA. Residue lysine 376 forms a Glycyl lysine isopeptide (Lys-Gly) (interchain with G-Cter in SUMO1); alternate linkage. Lysine 376 participates in a covalent cross-link: Glycyl lysine isopeptide (Lys-Gly) (interchain with G-Cter in SUMO2); alternate. Residue serine 377 is modified to Phosphoserine.

Belongs to the RSRC2 family.

This Pongo abelii (Sumatran orangutan) protein is Arginine/serine-rich coiled-coil protein 2 (RSRC2).